Here is a 423-residue protein sequence, read N- to C-terminus: Lipoamide acyltransferase component of branched-chain alpha-keto acid dehydrogenase complex (423 aa).

Residues 3–78 (THVIKMPDIG…AVGSELIRIE (76 aa)) enclose the Lipoyl-binding domain. Lys44 is modified (N6-lipoyllysine). The Peripheral subunit-binding (PSBD) domain occupies 137–174 (LASPAVRKRALDAGIELRYVHGSGPAGRILHEDLDAFM). Residues His395 and Asp399 contribute to the active site.

This sequence belongs to the 2-oxoacid dehydrogenase family. In terms of assembly, forms a 24-polypeptide structural core with octahedral symmetry. (R)-lipoate is required as a cofactor.

It catalyses the reaction N(6)-[(R)-dihydrolipoyl]-L-lysyl-[protein] + 2-methylpropanoyl-CoA = N(6)-[(R)-S(8)-2-methylpropanoyldihydrolipoyl]-L-lysyl-[protein] + CoA. Functionally, the branched-chain alpha-keto dehydrogenase complex catalyzes the overall conversion of alpha-keto acids to acyl-CoA and CO(2). It contains multiple copies of three enzymatic components: branched-chain alpha-keto acid decarboxylase (E1), lipoamide acyltransferase (E2) and lipoamide dehydrogenase (E3). This Pseudomonas putida (Arthrobacter siderocapsulatus) protein is Lipoamide acyltransferase component of branched-chain alpha-keto acid dehydrogenase complex (bkdB).